Here is a 326-residue protein sequence, read N- to C-terminus: MSDGAGAAARRWGKCGGRSCSRESIMVAFKGVWTQAFWKAVTAEFLAMLIFVLLSVGSTINWGGSENPLPVDMVLISLCFGLSIATMVQCFGHISGGHINPAVTVAMVCTRKISIAKSVFYITAQCLGAIIGAGILYLVTPPNVVGGLGVTTVHGNLTAGHGLLVELIITFQLVFTIFASCDSKRTDVTGSIALAIGFSVAIGHLFAINYTGASMNPARSFGPAVIMGNWENHWIYWVGPIIGAVLAGALYEYVFCPDVELKRRLKEAFSKAAQQTKGSYTEVEDNRSQVETEDLILKPGVVHVIDIDRGEDKKGKDSAGEVLSSV.

Residues 1–39 (MSDGAGAAARRWGKCGGRSCSRESIMVAFKGVWTQAFWK) lie on the Cytoplasmic side of the membrane. 2 S-palmitoyl cysteine lipidation sites follow: C15 and C20. The chain crosses the membrane as a helical span at residues 40–60 (AVTAEFLAMLIFVLLSVGSTI). Topologically, residues 61 to 72 (NWGGSENPLPVD) are extracellular. A helical membrane pass occupies residues 73 to 92 (MVLISLCFGLSIATMVQCFG). Residues 93–96 (HISG) lie on the Cytoplasmic side of the membrane. The segment at residues 97–104 (GHINPAVT) is an intramembrane region (discontinuously helical). The NPA 1 signature appears at 100–102 (NPA). The Cytoplasmic portion of the chain corresponds to 105–118 (VAMVCTRKISIAKS). S114 is subject to Phosphoserine; by PKG. A helical transmembrane segment spans residues 119 to 139 (VFYITAQCLGAIIGAGILYLV). At 140–158 (TPPNVVGGLGVTTVHGNLT) the chain is on the extracellular side. N156 carries an N-linked (GlcNAc...) asparagine glycan. Residues 159–179 (AGHGLLVELIITFQLVFTIFA) traverse the membrane as a helical segment. Over 180 to 187 (SCDSKRTD) the chain is Cytoplasmic. S183 bears the Phosphoserine; by PKC mark. Residues 188–208 (VTGSIALAIGFSVAIGHLFAI) form a helical membrane-spanning segment. N209 is a glycosylation site (N-linked (GlcNAc...) asparagine). The Extracellular segment spans residues 209-211 (NYT). Positions 212–225 (GASMNPARSFGPAV) form an intramembrane region, discontinuously helical. The NPA 2 motif lies at 216–218 (NPA). Topologically, residues 226 to 234 (IMGNWENHW) are extracellular. The chain crosses the membrane as a helical span at residues 235–255 (IYWVGPIIGAVLAGALYEYVF). Residues 256-326 (CPDVELKRRL…DSAGEVLSSV (71 aa)) lie on the Cytoplasmic side of the membrane. 2 positions are modified to phosphoserine: S279 and S288. T292 bears the Phosphothreonine mark. S324 bears the Phosphoserine mark.

Belongs to the MIP/aquaporin (TC 1.A.8) family. Homotetramer. The tetramers can form oligomeric arrays in membranes. The size of the oligomers differs between tissues and is smaller in skeletal muscle than in brain. Interaction between AQP4 oligomeric arrays in close-by cells can contribute to cell-cell adhesion. Part of a complex containing MLC1, TRPV4, HEPACAM and ATP1B1. Phosphorylation by PKC at Ser-183 reduces conductance by 50%. Phosphorylation by PKG at Ser-114 in response to glutamate increases conductance by 40%. Post-translationally, isoform Long: Palmitoylated on its N-terminal region.

The protein localises to the cell membrane. Its subcellular location is the basolateral cell membrane. It localises to the endosome membrane. It is found in the sarcolemma. The protein resides in the cell projection. It catalyses the reaction H2O(in) = H2O(out). Forms a water-specific channel. Plays an important role in brain water homeostasis and in glymphatic solute transport. Required for a normal rate of water exchange across the blood brain interface. Required for normal levels of cerebrospinal fluid influx into the brain cortex and parenchyma along paravascular spaces that surround penetrating arteries, and for normal drainage of interstitial fluid along paravenous drainage pathways. Thereby, it is required for normal clearance of solutes from the brain interstitial fluid, including soluble beta-amyloid peptides derived from APP. Plays a redundant role in urinary water homeostasis and urinary concentrating ability. In Notomys alexis (Spinifex hopping mouse), this protein is Aquaporin-4 (AQP4).